A 465-amino-acid chain; its full sequence is Flavin-containing monooxygenase FMO GS-OX-like 2 (465 aa).

Residue 18–23 (GAGAAG) coordinates FAD. 217-222 (GSSASG) contributes to the NADP(+) binding site.

It belongs to the FMO family. FAD is required as a cofactor.

In terms of biological role, catalyzes the conversion of methylthioalkyl glucosinolates of any chain length into methylsulfinylalkyl glucosinolates. The sequence is that of Flavin-containing monooxygenase FMO GS-OX-like 2 from Arabidopsis thaliana (Mouse-ear cress).